The primary structure comprises 258 residues: UPF0246 protein YaaA (258 aa).

The protein belongs to the UPF0246 family.

This Escherichia coli (strain K12 / MC4100 / BW2952) protein is UPF0246 protein YaaA.